A 209-amino-acid chain; its full sequence is Ribosomal RNA large subunit methyltransferase E (209 aa).

Positions 63, 65, 83, 99, and 124 each coordinate S-adenosyl-L-methionine. K164 (proton acceptor) is an active-site residue.

Belongs to the class I-like SAM-binding methyltransferase superfamily. RNA methyltransferase RlmE family.

Its subcellular location is the cytoplasm. The enzyme catalyses uridine(2552) in 23S rRNA + S-adenosyl-L-methionine = 2'-O-methyluridine(2552) in 23S rRNA + S-adenosyl-L-homocysteine + H(+). Specifically methylates the uridine in position 2552 of 23S rRNA at the 2'-O position of the ribose in the fully assembled 50S ribosomal subunit. This chain is Ribosomal RNA large subunit methyltransferase E, found in Escherichia coli O81 (strain ED1a).